The following is a 141-amino-acid chain: VLSPADKTNVKAAWGKVGAHAGZYGAEALERMFLSFPTTKTYFPHFDLSHGSAZVKGHGKKVAKALSBAVZHLDDMPNALSALSBLHAHKLRVBPVBFKLLNHCLLVTLAABFPSZFTPAVHASVDKFLASVSTVLTSKYR.

Residues 1–141 (VLSPADKTNV…VSTVLTSKYR (141 aa)) enclose the Globin domain. O2 is bound at residue H58. H87 serves as a coordination point for heme b.

The protein belongs to the globin family. Heterotetramer of two alpha chains and two beta chains. Red blood cells.

Involved in oxygen transport from the lung to the various peripheral tissues. This chain is Hemoglobin subunit alpha-3, found in Pan troglodytes (Chimpanzee).